Consider the following 310-residue polypeptide: U-megalopygitoxin(8)-Mo15 (310 aa).

Residues 1–27 (MARFSSKNLTKLFQYLVLSLLSPVAFG) form the signal peptide.

Belongs to the megalysin family. In terms of processing, contains 3 disulfide bonds. Expressed by the venom apparatus.

Its subcellular location is the secreted. The protein localises to the target cell membrane. May function as a large pore-forming protein. The polypeptide is U-megalopygitoxin(8)-Mo15 (Megalopyge opercularis (Southern flannel moth)).